The chain runs to 91 residues: Small ribosomal subunit protein bS20 (91 aa).

Residues 1-18 (MPLHKSAEKRLRQSEKRN) are compositionally biased toward basic and acidic residues. Residues 1–24 (MPLHKSAEKRLRQSEKRNVRNRAR) are disordered.

The protein belongs to the bacterial ribosomal protein bS20 family.

Its function is as follows. Binds directly to 16S ribosomal RNA. This Chlorobium phaeobacteroides (strain DSM 266 / SMG 266 / 2430) protein is Small ribosomal subunit protein bS20.